Consider the following 683-residue polypeptide: Acetyl-coenzyme A synthetase 2 (683 aa).

CoA-binding positions include 206 to 209 (RGGK) and T325. ATP-binding positions include 401–403 (GEP) and 425–430 (DTMWQT). 425 to 430 (DTMWQT) contributes to the AMP binding site. Residue K506 forms a Glycyl lysine isopeptide (Lys-Gly) (interchain with G-Cter in ubiquitin) linkage. Positions 516 and 531 each coordinate ATP. 2 residues coordinate AMP: D516 and R531. S539 is a binding site for CoA. Residue R542 participates in ATP binding. R612 contacts CoA. Phosphoserine is present on S679.

The protein belongs to the ATP-dependent AMP-binding enzyme family.

The protein localises to the cytoplasm. It localises to the nucleus. The enzyme catalyses acetate + ATP + CoA = acetyl-CoA + AMP + diphosphate. The protein operates within carbohydrate metabolism; pyruvate metabolism. Its function is as follows. Catalyzes the production of acetyl-CoA. Provides the acetyl-CoA source for histone acetylation in the nucleus. 'Anaerobic' isozyme of acetyl-coenzyme A synthetase, which is required for growth on fermentable carbon sources such as glucose. May be involved in the PDH (pyruvate dehydrogenase complex) bypass. In Saccharomyces cerevisiae (strain ATCC 204508 / S288c) (Baker's yeast), this protein is Acetyl-coenzyme A synthetase 2.